A 506-amino-acid chain; its full sequence is Allantoinase (506 aa).

Zn(2+)-binding residues include histidine 105, histidine 107, lysine 195, histidine 231, histidine 292, and aspartate 366. Lysine 195 carries the N6-carboxylysine modification.

Belongs to the metallo-dependent hydrolases superfamily. Allantoinase family. In terms of assembly, homotetramer. Zn(2+) serves as cofactor. Post-translationally, carboxylation allows a single lysine to coordinate two zinc ions.

The catalysed reaction is (S)-allantoin + H2O = allantoate + H(+). Its pathway is nitrogen metabolism; (S)-allantoin degradation; allantoate from (S)-allantoin: step 1/1. Functionally, catalyzes the conversion of allantoin (5-ureidohydantoin) to allantoate by hydrolytic cleavage of the five-member hydantoin ring. Catalyzes the first step of the ureide allantoin degradation followed by the sequential activity of AAH, UGLYAH and UAH which allows a complete purine breakdown without the intermediate generation of urea. This Arabidopsis thaliana (Mouse-ear cress) protein is Allantoinase (ALN).